Here is a 185-residue protein sequence, read N- to C-terminus: MKGSLFSTEIAEPYAQALMSLAQSRDITRSIGEDCRSILDILEESAELREFISSPIIKDEDKRGVLNRLLGNDIHHYLRNFLMLLVDKRRIVFLQAICEQYLALLRKLTNTVLAEVTASTELSEGQRRDVIDKIKALTGAESVELKTDIDPDLIGGVIIKVGSQVFDASLRGQLRRISISLTGAS.

The protein belongs to the ATPase delta chain family. In terms of assembly, F-type ATPases have 2 components, F(1) - the catalytic core - and F(0) - the membrane proton channel. F(1) has five subunits: alpha(3), beta(3), gamma(1), delta(1), epsilon(1). CF(0) has four main subunits: a(1), b(1), b'(1) and c(10-14). The alpha and beta chains form an alternating ring which encloses part of the gamma chain. F(1) is attached to F(0) by a central stalk formed by the gamma and epsilon chains, while a peripheral stalk is formed by the delta, b and b' chains.

The protein resides in the cellular thylakoid membrane. F(1)F(0) ATP synthase produces ATP from ADP in the presence of a proton or sodium gradient. F-type ATPases consist of two structural domains, F(1) containing the extramembraneous catalytic core and F(0) containing the membrane proton channel, linked together by a central stalk and a peripheral stalk. During catalysis, ATP synthesis in the catalytic domain of F(1) is coupled via a rotary mechanism of the central stalk subunits to proton translocation. Its function is as follows. This protein is part of the stalk that links CF(0) to CF(1). It either transmits conformational changes from CF(0) to CF(1) or is implicated in proton conduction. The protein is ATP synthase subunit delta of Crocosphaera subtropica (strain ATCC 51142 / BH68) (Cyanothece sp. (strain ATCC 51142)).